Reading from the N-terminus, the 246-residue chain is Transmembrane and ubiquitin-like domain-containing protein 1 (246 aa).

Residues 2–30 are required to release iHOPS from membranes; the sequence is ALIEGVGDEVTILFSALACLLVLALAWVS. A helical membrane pass occupies residues 11 to 31; it reads VTILFSALACLLVLALAWVST. A disordered region spans residues 35-102; sequence EGADPLPQPS…PPPPDSPQEP (68 aa). Positions 40–50 are enriched in pro residues; that stretch reads LPQPSGTPTPT. Threonine 71 and threonine 92 each carry phosphothreonine. 2 positions are modified to phosphoserine: serine 98 and serine 127. Positions 103-176 constitute a Ubiquitin-like domain; it reads LVLRLKFLND…LHCHVSTRVG (74 aa). 2 consecutive transmembrane segments (helical) span residues 195–215 and 221–241; these read VGSLLLPLLLLLLLLLWYCQI and FPLTATLGLAGFTLLLSLLAF.

In terms of assembly, interacts with EEF1A1, GRIA2, GRIP1, CAMLG, TUBG1. Interacts with NPM1 and CDKN2A; TMUB1 can enhance interaction between NPM1 and CDKN2A and is proposed to bridge the proteins; proposed to be mediated by iHOPS. Interacts with ERLIN2 and AMFR; TMUB1 promotes the interaction of ERLIN2 with AMFR. Post-translationally, processed by regulated intramembrane proteolysis (RIP) in the N-terminus to release iHOPS from membranes.

It is found in the membrane. Its subcellular location is the postsynaptic cell membrane. The protein resides in the recycling endosome. The protein localises to the cytoplasm. It localises to the nucleus. It is found in the nucleolus. Its subcellular location is the cytoskeleton. The protein resides in the microtubule organizing center. The protein localises to the centrosome. Involved in sterol-regulated ubiquitination and degradation of HMG-CoA reductase HMGCR. Involved in positive regulation of AMPA-selective glutamate receptor GRIA2 recycling to the cell surface. Acts as negative regulator of hepatocyte growth during regeneration. Its function is as follows. May contribute to the regulation of translation during cell-cycle progression. May contribute to the regulation of cell proliferation. May be involved in centrosome assembly. Modulates stabilization and nucleolar localization of tumor suppressor CDKN2A and enhances association between CDKN2A and NPM1. The chain is Transmembrane and ubiquitin-like domain-containing protein 1 (TMUB1) from Bos taurus (Bovine).